The following is a 549-amino-acid chain: MSKSQIESTWSSLLQELEIIWKEVGETETEREKILIEIEEECREVYNRKIEKVKEEKIRIKQEIADSEARVIDICSVMEEPPILGRHHQSDQQSGNGRSLKDELVKILQKLEEMEKRKSERKIQFIQVIDDIRCVREEINGESDDETCSSDFSADESDLSLRKLEELHRELYTLQEQKRNRVKQIQDNIRTLESLCSVLGLNFRETVTKIHPSLVDTEGSRSISNETLDKLASSVQQWHETKIQRMQELQDLVTTMLEFWNLMDTPAEEQQKFMDVSCNIAATVSEITKPNSLSIDLLEEVKAELCRLEELKWSKMKELVLKKRSELEEICRRTHIVLEEEDIAVENVIKAIESGDVNPENILEQIEYRAGKVKEEALSRKEILEKADKWLNACEEENWLEEYNQDENRYNAGKGSHLILKRAEKARALVNKLPAMVEALASKITIWESEKEYEFLFDGNRLLSMLEEYTELREEKEQERRRKRDLKKHQGQVTSEQDKGSVTKPQSAKKGLKVSTNKRFVSSPHTPQTDSPHSAKSNQSFSTPLSRHG.

3 coiled-coil regions span residues 36-123 (IEIE…ERKI), 160-199 (SLRK…CSVL), and 459-492 (GNRL…HQGQ). The interval 474-549 (EEKEQERRRK…SFSTPLSRHG (76 aa)) is disordered. A compositionally biased stretch (basic residues) spans 481–490 (RRKRDLKKHQ). Ser-501 and Ser-546 each carry phosphoserine. The span at 514–549 (VSTNKRFVSSPHTPQTDSPHSAKSNQSFSTPLSRHG) shows a compositional bias: polar residues.

This sequence belongs to the MAP65/ASE1 family. In terms of assembly, forms dimer. Binds to microtubules (MT).

It is found in the nucleus. The protein localises to the cytoplasm. Its subcellular location is the cytoskeleton. It localises to the spindle pole. This Arabidopsis thaliana (Mouse-ear cress) protein is 65-kDa microtubule-associated protein 9 (MAP65-9).